The chain runs to 183 residues: Shikimate kinase (183 aa).

Residue 14 to 19 (GAGKTT) participates in ATP binding. Thr-18 contacts Mg(2+). Asp-36, Arg-60, and Gly-82 together coordinate substrate. Arg-120 is an ATP binding site. Arg-139 contributes to the substrate binding site. An ATP-binding site is contributed by Gln-156.

Belongs to the shikimate kinase family. In terms of assembly, monomer. The cofactor is Mg(2+).

It localises to the cytoplasm. The catalysed reaction is shikimate + ATP = 3-phosphoshikimate + ADP + H(+). The protein operates within metabolic intermediate biosynthesis; chorismate biosynthesis; chorismate from D-erythrose 4-phosphate and phosphoenolpyruvate: step 5/7. Its function is as follows. Catalyzes the specific phosphorylation of the 3-hydroxyl group of shikimic acid using ATP as a cosubstrate. The sequence is that of Shikimate kinase from Thiobacillus denitrificans (strain ATCC 25259 / T1).